We begin with the raw amino-acid sequence, 286 residues long: Expansin-B4 (286 aa).

Residues 1–24 (MGSLSSLAAAAVFLSLLAVGHCAA) form the signal peptide. N-linked (GlcNAc...) asparagine glycosylation is found at Asn-28 and Asn-44. The 107-residue stretch at 75–181 (GGACGFKHTN…TRVPCEFPGL (107 aa)) folds into the Expansin-like EG45 domain. 3 disulfide bridges follow: Cys-78–Cys-106, Cys-109–Cys-176, and Cys-114–Cys-120. An Expansin-like CBD domain is found at 194-281 (VYFAVLVEYE…NWRPNTFYRS (88 aa)). Residue Asn-257 is glycosylated (N-linked (GlcNAc...) asparagine).

The protein belongs to the expansin family. Expansin B subfamily. Expressed in internodes.

It localises to the secreted. The protein localises to the cell wall. It is found in the membrane. May cause loosening and extension of plant cell walls by disrupting non-covalent bonding between cellulose microfibrils and matrix glucans. No enzymatic activity has been found. May be required for rapid internodal elongation in deepwater rice during submergence. This chain is Expansin-B4 (EXPB4), found in Oryza sativa subsp. japonica (Rice).